The primary structure comprises 170 residues: Cathelicidin antimicrobial peptide (170 aa).

Residues 1-30 form the signal peptide; the sequence is MKTQRDGHSLGRWSLVLLLLGLVMPLAIVA. Positions 31–131 are cleaved as a propeptide — cathelin-like domain (CLD); the sequence is QVLSYKEAVL…DISCDKDNKR (101 aa). 2 disulfides stabilise this stretch: cysteine 86–cysteine 97 and cysteine 108–cysteine 125. The active core stretch occupies residues 150 to 162; it reads FKRIVQRIKDFLR.

The protein belongs to the cathelicidin family. As to quaternary structure, monomer, homodimer or homotrimer (in vitro). Oligomerizes as tetra- or hexamer in solution (in vitro). In terms of processing, proteolytically cleaved by proteinase PRTN3 into antibacterial peptide LL-37. Proteolytically cleaved by cathepsin CTSG and neutrophil elastase ELANE. Post-translationally, resistant to proteolytic degradation in solution, and when bound to both zwitterionic (mimicking mammalian membranes) and negatively charged membranes (mimicking bacterial membranes). After secretion onto the skin surface, the CAMP gene product is processed by a serine protease-dependent mechanism into multiple novel antimicrobial peptides distinct from and shorter than cathelicidin LL-37. These peptides show enhanced antimicrobial action, acquiring the ability to kill skin pathogens such as S.aureus, E.coli and C.albicans. These peptides have lost the ability to stimulate CXCL8/IL8 release from keratinocytes. The peptides act synergistically, killing bacteria at lower concentrations when present together, and maintain activity at increased salt condition.

The protein localises to the secreted. It is found in the vesicle. Functionally, antimicrobial protein that is an integral component of the innate immune system. Binds to bacterial lipopolysaccharides (LPS). Acts via neutrophil N-formyl peptide receptors to enhance the release of CXCL2. Postsecretory processing generates multiple cathelicidin antimicrobial peptides with various lengths which act as a topical antimicrobial defense in sweat on skin. The unprocessed precursor form, cathelicidin antimicrobial peptide, inhibits the growth of Gram-negative E.coli and E.aerogenes with efficiencies comparable to that of the mature peptide LL-37 (in vitro). In terms of biological role, antimicrobial peptide that is an integral component of the innate immune system. Binds to bacterial lipopolysaccharides (LPS). Causes membrane permeabilization by forming transmembrane pores (in vitro). Causes lysis of E.coli. Exhibits antimicrobial activity against Gram-negative bacteria such as P.aeruginosa, S.typhimurium, E.aerogenes, E.coli and P.syringae, Gram-positive bacteria such as L.monocytogenes, S.epidermidis, S.pyogenes and S.aureus, as well as vancomycin-resistant enterococci (in vitro). Exhibits antimicrobial activity against methicillin-resistant S.aureus, P.mirabilis, and C.albicans in low-salt media, but not in media containing 100 mM NaCl (in vitro). Forms chiral supramolecular assemblies with quinolone signal (PQS) molecules of P.aeruginosa, which may lead to interference of bacterial quorum signaling and perturbance of bacterial biofilm formation. May form supramolecular fiber-like assemblies on bacterial membranes. Induces cytokine and chemokine producation as well as TNF/TNFA and CSF2/GMCSF production in normal human keratinocytes. Exhibits hemolytic activity against red blood cells. Its function is as follows. Exhibits antimicrobial activity against E.coli and B.megaterium (in vitro). This is Cathelicidin antimicrobial peptide from Pan troglodytes (Chimpanzee).